A 252-amino-acid polypeptide reads, in one-letter code: 4-hydroxy-tetrahydrodipicolinate reductase (252 aa).

NAD(+) contacts are provided by residues 8–13 (GCCGKM), 84–86 (CST), and 108–111 (SANM). H141 acts as the Proton donor/acceptor in catalysis. Position 142 (H142) interacts with (S)-2,3,4,5-tetrahydrodipicolinate. Catalysis depends on K145, which acts as the Proton donor. 151 to 152 (GT) lines the (S)-2,3,4,5-tetrahydrodipicolinate pocket.

It belongs to the DapB family.

The protein resides in the cytoplasm. It catalyses the reaction (S)-2,3,4,5-tetrahydrodipicolinate + NAD(+) + H2O = (2S,4S)-4-hydroxy-2,3,4,5-tetrahydrodipicolinate + NADH + H(+). It carries out the reaction (S)-2,3,4,5-tetrahydrodipicolinate + NADP(+) + H2O = (2S,4S)-4-hydroxy-2,3,4,5-tetrahydrodipicolinate + NADPH + H(+). The protein operates within amino-acid biosynthesis; L-lysine biosynthesis via DAP pathway; (S)-tetrahydrodipicolinate from L-aspartate: step 4/4. In terms of biological role, catalyzes the conversion of 4-hydroxy-tetrahydrodipicolinate (HTPA) to tetrahydrodipicolinate. The chain is 4-hydroxy-tetrahydrodipicolinate reductase from Clostridium botulinum (strain Eklund 17B / Type B).